Consider the following 263-residue polypeptide: tRNA (guanine-N(1)-)-methyltransferase (263 aa).

S-adenosyl-L-methionine is bound by residues G124 and L144–L149.

Belongs to the RNA methyltransferase TrmD family. As to quaternary structure, homodimer.

The protein localises to the cytoplasm. It carries out the reaction guanosine(37) in tRNA + S-adenosyl-L-methionine = N(1)-methylguanosine(37) in tRNA + S-adenosyl-L-homocysteine + H(+). Specifically methylates guanosine-37 in various tRNAs. The sequence is that of tRNA (guanine-N(1)-)-methyltransferase from Aromatoleum aromaticum (strain DSM 19018 / LMG 30748 / EbN1) (Azoarcus sp. (strain EbN1)).